Here is a 511-residue protein sequence, read N- to C-terminus: Bifunctional purine biosynthesis protein PurH (511 aa).

The region spanning 1–145 (MKKRALVSVS…KNHQFVSVIV (145 aa)) is the MGS-like domain.

It belongs to the PurH family.

It carries out the reaction (6R)-10-formyltetrahydrofolate + 5-amino-1-(5-phospho-beta-D-ribosyl)imidazole-4-carboxamide = 5-formamido-1-(5-phospho-D-ribosyl)imidazole-4-carboxamide + (6S)-5,6,7,8-tetrahydrofolate. It catalyses the reaction IMP + H2O = 5-formamido-1-(5-phospho-D-ribosyl)imidazole-4-carboxamide. It functions in the pathway purine metabolism; IMP biosynthesis via de novo pathway; 5-formamido-1-(5-phospho-D-ribosyl)imidazole-4-carboxamide from 5-amino-1-(5-phospho-D-ribosyl)imidazole-4-carboxamide (10-formyl THF route): step 1/1. Its pathway is purine metabolism; IMP biosynthesis via de novo pathway; IMP from 5-formamido-1-(5-phospho-D-ribosyl)imidazole-4-carboxamide: step 1/1. This is Bifunctional purine biosynthesis protein PurH from Bacillus cereus (strain G9842).